The sequence spans 298 residues: ATP synthase gamma chain (298 aa).

Belongs to the ATPase gamma chain family. F-type ATPases have 2 components, CF(1) - the catalytic core - and CF(0) - the membrane proton channel. CF(1) has five subunits: alpha(3), beta(3), gamma(1), delta(1), epsilon(1). CF(0) has three main subunits: a, b and c.

It localises to the cell inner membrane. In terms of biological role, produces ATP from ADP in the presence of a proton gradient across the membrane. The gamma chain is believed to be important in regulating ATPase activity and the flow of protons through the CF(0) complex. The chain is ATP synthase gamma chain from Francisella tularensis subsp. tularensis (strain WY96-3418).